Consider the following 537-residue polypeptide: MSGQQRGSVILVPEHLAGALTKLMSDFITGQDVTLSGGNIAVKIRDAINQTPGGGDVAILSSLFALWNALPTSGRQSSRDDLIPAAVQALTTAHNLCLGVIPGETSHKDTPESLLRAIVTGLQKLWVDSCGCPECLQCLKGLKAIKPGLYEIPRIIPHTKQCSPVNLLNMLVHKLVALRGHVQLAYDARVLTPDFHEIPDLDDSDAVFARTLLAALFHLNMFFILKDYITQDSMSLKQALSGHWMSATGNPLPAAPETLRDYLEAFRNSDNHFYLPTTGPLNTFQFPEELLGRVVVIDSSLCAASHVQDVITHGVGAGVPRPRFSALPPAPSREPQQTCSQLTSRGNESSRRNLGQPGGTSPAVPPVCPIVSLTASGAKQNRGGMGSLHLAKPEETSPAVSPVCPIASPAASRSKQHCGVTGSSQAAPSFSSVAPVASLSGDLEEEEEGSRESPSLPSSKKGDEEFEAWLEAQDANLEDVQREFSGLRVIGDEDEDGSEDGEFSDLDLSDSDHEGDEGGGAVGGGRSLHSLYSLSVV.

Disordered regions lie at residues 321–366 (RPRF…AVPP), 378–398 (AKQNRGGMGSLHLAKPEETSP), 414–466 (SKQH…DEEF), and 486–537 (GLRV…LSVV). Polar residues predominate over residues 334–347 (EPQQTCSQLTSRGN). The span at 423–441 (SSQAAPSFSSVAPVASLSG) shows a compositional bias: low complexity. The span at 492–517 (DEDEDGSEDGEFSDLDLSDSDHEGDE) shows a compositional bias: acidic residues.

This sequence belongs to the lymphocryptovirus BRRF2 family.

It is found in the virion tegument. In Homo sapiens (Human), this protein is Tegument protein BRRF2.